The chain runs to 529 residues: Probable bifunctional tRNA threonylcarbamoyladenosine biosynthesis protein (529 aa).

Positions 1–324 are kae1; it reads MIVLGLEGTA…FRIDEVDAPW (324 aa). Fe cation contacts are provided by H107, H111, and Y128. Residues 128-132, D160, G173, E177, and N257 contribute to the L-threonylcarbamoyladenylate site; that span reads YVSGG. Residue D285 coordinates Fe cation. The 201-residue stretch at 329-529 folds into the Protein kinase domain; the sequence is SRKDYGKAGA…SAIRRRHRYV (201 aa). Residues 335-342 and K355 contribute to the ATP site; that span reads KAGAESRI. Residue D447 is the Proton acceptor; for kinase activity of the active site.

In the N-terminal section; belongs to the KAE1 / TsaD family. The protein in the C-terminal section; belongs to the protein kinase superfamily. Tyr protein kinase family. BUD32 subfamily. Component of the KEOPS complex that consists of Kae1, Bud32, Cgi121 and Pcc1; the whole complex dimerizes. The cofactor is Fe(2+).

The protein resides in the cytoplasm. The enzyme catalyses L-seryl-[protein] + ATP = O-phospho-L-seryl-[protein] + ADP + H(+). It catalyses the reaction L-threonyl-[protein] + ATP = O-phospho-L-threonyl-[protein] + ADP + H(+). It carries out the reaction L-threonylcarbamoyladenylate + adenosine(37) in tRNA = N(6)-L-threonylcarbamoyladenosine(37) in tRNA + AMP + H(+). Its function is as follows. Required for the formation of a threonylcarbamoyl group on adenosine at position 37 (t(6)A37) in tRNAs that read codons beginning with adenine. Is a component of the KEOPS complex that is probably involved in the transfer of the threonylcarbamoyl moiety of threonylcarbamoyl-AMP (TC-AMP) to the N6 group of A37. The Kae1 domain likely plays a direct catalytic role in this reaction. The Bud32 domain probably displays kinase activity that regulates Kae1 function. This Thermoplasma acidophilum (strain ATCC 25905 / DSM 1728 / JCM 9062 / NBRC 15155 / AMRC-C165) protein is Probable bifunctional tRNA threonylcarbamoyladenosine biosynthesis protein.